A 502-amino-acid chain; its full sequence is MAPLKLNSKNLSQIAAAGGALVKIPTYQRGRAVKEGIVHIGVGGFHRAHLAVYIDQLMQKHGVTDYAICGVGLQPFDSAMRDALASQDHLYTLIERSAKGSFAHVIGSINSYLFAPDNREAVIAKMAHPDTKIVSLTITESGYYYNENTHELQSEHPDIQFDLDPANEKAPRTTFGFLYAGLTRRYQQGLKPFTVMSCDNMQKNGSITRHMLESFARLRNPEVAEWIAEEGAFPNAMVDRITPQTSENDKTALADTFGIVDSWPVVTEPFTQWVIEDQFSNGRPPFEKVGVQVVKDVHAVEQFEKHKLRLLNGSHSALGYPGQLAGFKYVHEVMENPLFRKFVWQMMQEEVKPLLPEIPGVNIDEYCNTLIERFTNPTIMDQLPRICLNASGKIPQFIMPSIAEAIWVTGPFRRLCFVAAAWFHYVKGVDDSGKPFEVVDPMREELQAKARAGGNDPFELLSIKSLFGDDLRSDERFLKEITTAMNDIARDGIMKTLPKYID.

Residue Ile37 to Ala48 coordinates NAD(+).

It belongs to the mannitol dehydrogenase family. Monomer.

The enzyme catalyses D-mannitol + NAD(+) = D-fructose + NADH + H(+). Functionally, catalyzes the NAD(H)-dependent interconversion of D-fructose and D-mannitol in the mannitol metabolic pathway. The sequence is that of Mannitol 2-dehydrogenase from Neosartorya fischeri (strain ATCC 1020 / DSM 3700 / CBS 544.65 / FGSC A1164 / JCM 1740 / NRRL 181 / WB 181) (Aspergillus fischerianus).